The sequence spans 269 residues: Integral membrane protein 2C (269 aa).

T39 is modified (phosphothreonine). A helical; Signal-anchor for type II membrane protein transmembrane segment spans residues 57-77 (VGGVCYLSMGMVVLLMGLVFA). The BRICHOS domain maps to 138 to 232 (FGGGDPADII…LCNGKDTYRL (95 aa)). C165 and C224 are disulfide-bonded. An N-linked (GlcNAc...) asparagine glycan is attached at N171.

Belongs to the ITM2 family. In terms of assembly, interacts with BACE1. Interacts with APP. Interacts with STMN2. In terms of processing, type I membrane-bound, as well as soluble, furin has a pre-eminent role in ITM2C proteolytic processing. PCSK7 and PCSK5 may also be involved although to a lesser extent. The soluble form of PCSK7 is incapable of processing ITM2C. Fails to undergo shedding by ADAM10 and intramembrane cleavage by SPPL2B.

It localises to the lysosome membrane. The protein resides in the cell membrane. Functionally, negative regulator of amyloid-beta peptide production. May inhibit the processing of APP by blocking its access to alpha- and beta-secretase. Binding to the beta-secretase-cleaved APP C-terminal fragment is negligible, suggesting that ITM2C is a poor gamma-secretase cleavage inhibitor. May play a role in TNF-induced cell death and neuronal differentiation. The protein is Integral membrane protein 2C (Itm2c) of Mus musculus (Mouse).